A 349-amino-acid polypeptide reads, in one-letter code: Ureidoglycolate dehydrogenase (NAD(+)) (349 aa).

The active-site Proton acceptor is the His116. NAD(+) is bound by residues Ser140, 174 to 176 (DMA), Lys224, and 306 to 308 (GQD).

It belongs to the LDH2/MDH2 oxidoreductase family. In terms of assembly, homodimer.

Its subcellular location is the cytoplasm. It catalyses the reaction (S)-ureidoglycolate + NAD(+) = N-carbamoyl-2-oxoglycine + NADH + H(+). Its pathway is nitrogen metabolism; (S)-allantoin degradation; oxalurate from (S)-ureidoglycolate: step 1/1. In terms of biological role, allD plays a pivotal role as a metabolic branch-point enzyme in nitrogen utilization via the assimilation of allantoin. It is able to utilize allantoin as a sole source of nitrogen under anaerobic conditions. Catalyzes the oxidation of ureidoglycolate to oxalurate. In Escherichia coli O157:H7, this protein is Ureidoglycolate dehydrogenase (NAD(+)).